The chain runs to 210 residues: MTTLETLKWDGKKAGKVSIDLKVAKETSSADLIHRAVLRQLANKRQGTASTLTRSEVRGGGRKPYKQKGTGRARQGSIRTPLRPGGGVIFGPKPRSYNLDMNRKERRLALRTALMSRISDFKTVEDFGSTLDQPKTSEIINGLSRLGIEKTEKVLVILDNPSDVIKKSINNLEKVKLIAADQLNVFDILNANKLVIGQSAINKIQEVYAS.

Residues 44–54 (KRQGTASTLTR) show a composition bias toward polar residues. Residues 44-94 (KRQGTASTLTRSEVRGGGRKPYKQKGTGRARQGSIRTPLRPGGGVIFGPKP) form a disordered region. Basic residues predominate over residues 60 to 71 (GGRKPYKQKGTG).

Belongs to the universal ribosomal protein uL4 family. Part of the 50S ribosomal subunit.

Its function is as follows. One of the primary rRNA binding proteins, this protein initially binds near the 5'-end of the 23S rRNA. It is important during the early stages of 50S assembly. It makes multiple contacts with different domains of the 23S rRNA in the assembled 50S subunit and ribosome. Functionally, forms part of the polypeptide exit tunnel. In Prochlorococcus marinus subsp. pastoris (strain CCMP1986 / NIES-2087 / MED4), this protein is Large ribosomal subunit protein uL4.